A 289-amino-acid polypeptide reads, in one-letter code: Syntaxin-3 (289 aa).

Over 1 to 263 the chain is Cytoplasmic; sequence MKDRLEQLKA…MKYQGQARKK (263 aa). Residues 32-111 are a coiled coil; that stretch reads MDEFFSEIEE…IEEDEVRSSA (80 aa). The 63-residue stretch at 191 to 253 folds into the t-SNARE coiled-coil homology domain; that stretch reads LSEIEGRHKD…EKARDETKRA (63 aa). The helical; Anchor for type IV membrane protein transmembrane segment at 264 to 284 threads the bilayer; sequence LIIIIVIVVVLLGILALIIGL. Residues 285 to 289 are Extracellular-facing; that stretch reads SVGLK.

The protein belongs to the syntaxin family. In terms of assembly, interacts with REEP6. Interacts with PRPH2 in rod and cone photoreceptors. Interacts with ROM1. Interacts with SNAP25. Interacts with VAMP2. As to expression, heart, spleen, lung and kidney.

The protein resides in the membrane. Potentially involved in docking of synaptic vesicles at presynaptic active zones. Apical receptor involved in membrane fusion of apical vesicles. Essential for survival of retinal photoreceetors. In Rattus norvegicus (Rat), this protein is Syntaxin-3 (Stx3).